Reading from the N-terminus, the 378-residue chain is Ribosomal RNA large subunit methyltransferase G (378 aa).

The protein belongs to the methyltransferase superfamily. RlmG family.

The protein localises to the cytoplasm. The enzyme catalyses guanosine(1835) in 23S rRNA + S-adenosyl-L-methionine = N(2)-methylguanosine(1835) in 23S rRNA + S-adenosyl-L-homocysteine + H(+). Its function is as follows. Specifically methylates the guanine in position 1835 (m2G1835) of 23S rRNA. The sequence is that of Ribosomal RNA large subunit methyltransferase G from Citrobacter koseri (strain ATCC BAA-895 / CDC 4225-83 / SGSC4696).